The sequence spans 525 residues: Ribosomal protein S6 kinase beta-1 (525 aa).

A disordered region spans residues 1–54 (MRRRRRRDGFYPAPDFRDREAEDMAGVFDIDLDQPEDAGSEDELEEGGQLNESM). Positions 28–32 (FDIDL) match the TOS motif motif. The span at 30-46 (IDLDQPEDAGSEDELEE) shows a compositional bias: acidic residues. In terms of domain architecture, Protein kinase spans 91 to 352 (FELLRVLGKG…AGEVQAHPFF (262 aa)). ATP-binding positions include 97 to 105 (LGKGGYGKV) and Lys-123. The active-site Proton acceptor is the Asp-218. Residue Thr-252 is modified to Phosphothreonine; by PDPK1. Residues 353-423 (RHINWEELLA…VAPSVLESVK (71 aa)) form the AGC-kinase C-terminal domain. The segment at 380 to 399 (SQFDSKFTRQTPVDSPDDST) is disordered. Over residues 381 to 399 (QFDSKFTRQTPVDSPDDST) the composition is skewed to polar residues. Phosphoserine is present on Ser-394. Thr-412 is modified (phosphothreonine; by MTOR, NEK6 and NEK7). Residues 424-525 (EKFSFEPKIR…KRPEHLRMNL (102 aa)) are autoinhibitory domain. 2 positions are modified to phosphoserine: Ser-434 and Ser-441. Thr-444 carries the phosphothreonine modification. Phosphoserine is present on residues Ser-447 and Ser-452. The disordered stretch occupies residues 486 to 509 (VTTSGEASAPLPIRQPNSGPYKKQ). The residue at position 516 (Lys-516) is an N6-acetyllysine.

Belongs to the protein kinase superfamily. AGC Ser/Thr protein kinase family. S6 kinase subfamily. In terms of assembly, interacts with PPP1R9A/neurabin-1. Interacts with RPTOR. Interacts with IRS1. Interacts with EIF3B and EIF3C. Interacts with TRAF4. Interacts with POLDIP3. Interacts (via N-terminus) with IER5. Phosphorylation at Thr-412 is regulated by mTORC1. The phosphorylation at this site is maintained by an agonist-dependent autophosphorylation mechanism. Activated by phosphorylation at Thr-252 by PDPK1. Dephosphorylation by PPP1CC at Thr-412 in mitochondrion.

The protein resides in the cytoplasm. It localises to the synapse. Its subcellular location is the synaptosome. The protein localises to the mitochondrion outer membrane. It is found in the mitochondrion. It catalyses the reaction L-seryl-[protein] + ATP = O-phospho-L-seryl-[protein] + ADP + H(+). It carries out the reaction L-threonyl-[protein] + ATP = O-phospho-L-threonyl-[protein] + ADP + H(+). Its activity is regulated as follows. Activation requires multiple phosphorylation events on serine/threonine residues. Activation appears to be first mediated by phosphorylation of multiple sites in the autoinhibitory domain, which facilitates phosphorylation at Thr-412, disrupting the autoinhibitory mechanism and allowing phosphorylation of Thr-252 by PDPK1. The active conformation of the kinase is believed to be stabilized by a mechanism involving three conserved phosphorylation sites located in the kinase domain activation loop (Thr-252) and in the AGC-kinase C-terminal domain (Ser-394 in the middle of the tail/linker region and Thr-412 within a hydrophobic motif at its end). Activated by mTORC1; isoform Alpha I and isoform Alpha II are sensitive to rapamycin, which inhibits activating phosphorylation at Thr-412. Activated by PDPK1. Functionally, serine/threonine-protein kinase that acts downstream of mTOR signaling in response to growth factors and nutrients to promote cell proliferation, cell growth and cell cycle progression. Regulates protein synthesis through phosphorylation of EIF4B, RPS6 and EEF2K, and contributes to cell survival by repressing the pro-apoptotic function of BAD. Under conditions of nutrient depletion, the inactive form associates with the EIF3 translation initiation complex. Upon mitogenic stimulation, phosphorylation by the mechanistic target of rapamycin complex 1 (mTORC1) leads to dissociation from the EIF3 complex and activation. The active form then phosphorylates and activates several substrates in the pre-initiation complex, including the EIF2B complex and the cap-binding complex component EIF4B. Also controls translation initiation by phosphorylating a negative regulator of EIF4A, PDCD4, targeting it for ubiquitination and subsequent proteolysis. Promotes initiation of the pioneer round of protein synthesis by phosphorylating POLDIP3/SKAR. In response to IGF1, activates translation elongation by phosphorylating EEF2 kinase (EEF2K), which leads to its inhibition and thus activation of EEF2. Also plays a role in feedback regulation of mTORC2 by mTORC1 by phosphorylating MAPKAP1/SIN1, MTOR and RICTOR, resulting in the inhibition of mTORC2 and AKT1 signaling. Also involved in feedback regulation of mTORC1 and mTORC2 by phosphorylating DEPTOR. Mediates cell survival by phosphorylating the pro-apoptotic protein BAD and suppressing its pro-apoptotic function. Phosphorylates mitochondrial URI1 leading to dissociation of a URI1-PPP1CC complex. The free mitochondrial PPP1CC can then dephosphorylate RPS6KB1 at Thr-412, which is proposed to be a negative feedback mechanism for the RPS6KB1 anti-apoptotic function. Mediates TNF-alpha-induced insulin resistance by phosphorylating IRS1 at multiple serine residues, resulting in accelerated degradation of IRS1. In cells lacking functional TSC1-2 complex, constitutively phosphorylates and inhibits GSK3B. May be involved in cytoskeletal rearrangement through binding to neurabin. Phosphorylates and activates the pyrimidine biosynthesis enzyme CAD, downstream of MTOR. Following activation by mTORC1, phosphorylates EPRS and thereby plays a key role in fatty acid uptake by adipocytes and also most probably in interferon-gamma-induced translation inhibition. The polypeptide is Ribosomal protein S6 kinase beta-1 (RPS6KB1) (Oryctolagus cuniculus (Rabbit)).